The following is a 213-amino-acid chain: Large ribosomal subunit protein eL14 (213 aa).

K79 is modified (N6-acetyllysine). K85 carries the N6-acetyllysine; alternate modification. K85 carries the N6-succinyllysine; alternate modification. Residue K124 forms a Glycyl lysine isopeptide (Lys-Gly) (interchain with G-Cter in SUMO2) linkage. S139 is modified (phosphoserine). Positions T166–A213 are disordered. The stretch at K169–A173 is one 1-1; approximate repeat. The interval K169–P188 is 4 X 5 AA tandem repeats of Q-K-A-[APS]-X. 5 tandem repeats follow at residues Q174–A178, Q179–G183, Q184–P188, K191–Q193, and K194–Q196. The interval K191 to Q196 is 2 X 3 AA tandem repeats of K-G-Q. N6-succinyllysine is present on K202.

This sequence belongs to the eukaryotic ribosomal protein eL14 family. In terms of assembly, component of the large ribosomal subunit.

It localises to the cytoplasm. Component of the large ribosomal subunit. The ribosome is a large ribonucleoprotein complex responsible for the synthesis of proteins in the cell. The polypeptide is Large ribosomal subunit protein eL14 (RPL14) (Sus scrofa (Pig)).